A 262-amino-acid polypeptide reads, in one-letter code: Indole-3-glycerol phosphate synthase (262 aa).

This sequence belongs to the TrpC family.

It carries out the reaction 1-(2-carboxyphenylamino)-1-deoxy-D-ribulose 5-phosphate + H(+) = (1S,2R)-1-C-(indol-3-yl)glycerol 3-phosphate + CO2 + H2O. It participates in amino-acid biosynthesis; L-tryptophan biosynthesis; L-tryptophan from chorismate: step 4/5. The sequence is that of Indole-3-glycerol phosphate synthase from Leptothrix cholodnii (strain ATCC 51168 / LMG 8142 / SP-6) (Leptothrix discophora (strain SP-6)).